The following is a 255-amino-acid chain: 1-(5-phosphoribosyl)-5-[(5-phosphoribosylamino)methylideneamino] imidazole-4-carboxamide isomerase (255 aa).

Residue aspartate 8 is the Proton acceptor of the active site. Aspartate 129 acts as the Proton donor in catalysis.

This sequence belongs to the HisA/HisF family.

The protein resides in the cytoplasm. It catalyses the reaction 1-(5-phospho-beta-D-ribosyl)-5-[(5-phospho-beta-D-ribosylamino)methylideneamino]imidazole-4-carboxamide = 5-[(5-phospho-1-deoxy-D-ribulos-1-ylimino)methylamino]-1-(5-phospho-beta-D-ribosyl)imidazole-4-carboxamide. It participates in amino-acid biosynthesis; L-histidine biosynthesis; L-histidine from 5-phospho-alpha-D-ribose 1-diphosphate: step 4/9. This chain is 1-(5-phosphoribosyl)-5-[(5-phosphoribosylamino)methylideneamino] imidazole-4-carboxamide isomerase, found in Prochlorococcus marinus (strain AS9601).